We begin with the raw amino-acid sequence, 322 residues long: MSEHQWKPTASIQTLLSRAKIIAEIRQFFSERGLLEVETPILSEFGVTDVHLSTFSTKLISPFQKKEKTLWLSTSPEYPMKRLLSAGSGAIFQLCKVFRNEEAGKKHSPEFTMLEWYRPYFDMYRLINEVDDLLQYILDCEPAESMSYQFAFQEYVGIDPLSASQDKLIEKAKEYCLENAEREDRDTLLQFLFNVAVESQIGKDKPVAIYHFPATQAALAQISSEDHRVAERFEFYYKGLELANGFCELTDANEQRHRFEQDNKQRERLGLPIHQIDERFLAALKAGVPNCSGVALGVDRLIMIALGLENINEVIAFSIENA.

Residue 75 to 77 coordinates substrate; it reads SPE. ATP is bound at residue 99–101; it reads RNE. Tyrosine 117 lines the substrate pocket. Position 241–242 (241–242) interacts with ATP; it reads EL. Glutamate 248 contributes to the substrate binding site. Glycine 297 provides a ligand contact to ATP.

It belongs to the class-II aminoacyl-tRNA synthetase family. EpmA subfamily. In terms of assembly, homodimer.

It carries out the reaction D-beta-lysine + L-lysyl-[protein] + ATP = N(6)-((3R)-3,6-diaminohexanoyl)-L-lysyl-[protein] + AMP + diphosphate + H(+). Its function is as follows. With EpmB is involved in the beta-lysylation step of the post-translational modification of translation elongation factor P (EF-P). Catalyzes the ATP-dependent activation of (R)-beta-lysine produced by EpmB, forming a lysyl-adenylate, from which the beta-lysyl moiety is then transferred to the epsilon-amino group of a conserved specific lysine residue in EF-P. The polypeptide is Elongation factor P--(R)-beta-lysine ligase (Avibacterium paragallinarum (Haemophilus gallinarum)).